The following is a 507-amino-acid chain: Sterol 14-alpha demethylase CYP51A (507 aa).

A helical membrane pass occupies residues 7–29; that stretch reads YPLWVLVALFAVIIANLLYQQLP. Y105 is a lanosterol binding site. Residue C449 participates in heme binding.

This sequence belongs to the cytochrome P450 family. Requires heme as cofactor.

The protein resides in the endoplasmic reticulum membrane. The catalysed reaction is a 14alpha-methyl steroid + 3 reduced [NADPH--hemoprotein reductase] + 3 O2 = a Delta(14) steroid + formate + 3 oxidized [NADPH--hemoprotein reductase] + 4 H2O + 4 H(+). It catalyses the reaction a 14alpha-methyl steroid + reduced [NADPH--hemoprotein reductase] + O2 = a 14alpha-hydroxymethyl steroid + oxidized [NADPH--hemoprotein reductase] + H2O + H(+). The enzyme catalyses a 14alpha-hydroxymethyl steroid + reduced [NADPH--hemoprotein reductase] + O2 = a 14alpha-formyl steroid + oxidized [NADPH--hemoprotein reductase] + 2 H2O + H(+). It carries out the reaction a 14alpha-formyl steroid + reduced [NADPH--hemoprotein reductase] + O2 = a Delta(14) steroid + formate + oxidized [NADPH--hemoprotein reductase] + H2O + 2 H(+). The catalysed reaction is lanosterol + 3 reduced [NADPH--hemoprotein reductase] + 3 O2 = 4,4-dimethyl-5alpha-cholesta-8,14,24-trien-3beta-ol + formate + 3 oxidized [NADPH--hemoprotein reductase] + 4 H2O + 4 H(+). It catalyses the reaction lanosterol + reduced [NADPH--hemoprotein reductase] + O2 = 32-hydroxylanosterol + oxidized [NADPH--hemoprotein reductase] + H2O + H(+). The enzyme catalyses 32-hydroxylanosterol + reduced [NADPH--hemoprotein reductase] + O2 = 32-oxolanosterol + oxidized [NADPH--hemoprotein reductase] + 2 H2O + H(+). It carries out the reaction 32-oxolanosterol + reduced [NADPH--hemoprotein reductase] + O2 = 4,4-dimethyl-5alpha-cholesta-8,14,24-trien-3beta-ol + formate + oxidized [NADPH--hemoprotein reductase] + H2O + 2 H(+). The catalysed reaction is eburicol + 3 reduced [NADPH--hemoprotein reductase] + 3 O2 = 14-demethyleburicol + formate + 3 oxidized [NADPH--hemoprotein reductase] + 4 H2O + 4 H(+). It catalyses the reaction eburicol + reduced [NADPH--hemoprotein reductase] + O2 = 32-hydroxyeburicol + oxidized [NADPH--hemoprotein reductase] + H2O + H(+). The enzyme catalyses 32-hydroxyeburicol + reduced [NADPH--hemoprotein reductase] + O2 = 32-oxoeburicol + oxidized [NADPH--hemoprotein reductase] + 2 H2O + H(+). It carries out the reaction 32-oxoeburicol + reduced [NADPH--hemoprotein reductase] + O2 = 14-demethyleburicol + formate + oxidized [NADPH--hemoprotein reductase] + H2O + 2 H(+). Its pathway is steroid metabolism; ergosterol biosynthesis. Together with cyp51B and cyp51C, encodes the sterol 14alpha-demethylase that plays a critical role in the third module of ergosterol biosynthesis pathway, being ergosterol the major sterol component in fungal membranes that participates in a variety of functions. CYP51A encodes the sterol 14-alpha-demethylase induced on ergosterol depletion and is responsible for the intrinsic variation in azole sensitivity. The third module or late pathway involves the ergosterol synthesis itself through consecutive reactions that mainly occur in the endoplasmic reticulum (ER) membrane. In filamentous fungi, during the initial step of this module, lanosterol (lanosta-8,24-dien-3beta-ol) can be metabolized to eburicol. Sterol 14alpha-demethylase catalyzes the three-step oxidative removal of the 14alpha-methyl group (C-32) of both these sterols in the form of formate, and converts eburicol and lanosterol to 14-demethyleburicol (4,4,24-trimethylergosta-8,14,24(28)-trienol) and 4,4-dimethyl-5alpha-cholesta-8,14,24-trien-3beta-ol, respectively, which are further metabolized by other enzymes in the pathway to ergosterol. Can also use substrates not intrinsic to fungi, such as 24,25-dihydrolanosterol (DHL), producing 4,4'-dimethyl-8,14-cholestadien-3-beta-ol, but at lower rates than the endogenous substrates. The sequence is that of Sterol 14-alpha demethylase CYP51A from Gibberella zeae (strain ATCC MYA-4620 / CBS 123657 / FGSC 9075 / NRRL 31084 / PH-1) (Wheat head blight fungus).